Consider the following 224-residue polypeptide: Octanoyltransferase (224 aa).

The BPL/LPL catalytic domain maps to 38 to 213 (AETTDEVWLL…QFVRAAGFQS (176 aa)). Substrate contacts are provided by residues 77–84 (RGGQVTYH), 144–146 (SLG), and 157–159 (GLA). The active-site Acyl-thioester intermediate is Cys175.

Belongs to the LipB family.

The protein resides in the cytoplasm. It catalyses the reaction octanoyl-[ACP] + L-lysyl-[protein] = N(6)-octanoyl-L-lysyl-[protein] + holo-[ACP] + H(+). The protein operates within protein modification; protein lipoylation via endogenous pathway; protein N(6)-(lipoyl)lysine from octanoyl-[acyl-carrier-protein]: step 1/2. Catalyzes the transfer of endogenously produced octanoic acid from octanoyl-acyl-carrier-protein onto the lipoyl domains of lipoate-dependent enzymes. Lipoyl-ACP can also act as a substrate although octanoyl-ACP is likely to be the physiological substrate. The sequence is that of Octanoyltransferase from Hahella chejuensis (strain KCTC 2396).